We begin with the raw amino-acid sequence, 241 residues long: Tetrahydromethanopterin S-methyltransferase subunit A (241 aa).

The Cytoplasmic portion of the chain corresponds to 1–220; it reads MANKREPAPG…AKWQAGYYNG (220 aa). Position 85 (histidine 85) interacts with 5-hydroxybenzimidazolylcob(I)amide. A helical membrane pass occupies residues 221-241; that stretch reads KIQGIATGLFLMLLIMGILMF.

Belongs to the MtrA family. As to quaternary structure, the complex is composed of 8 subunits; MtrA, MtrB, MtrC, MtrD, MtrE, MtrF, MtrG and MtrH. It depends on 5-hydroxybenzimidazolylcob(I)amide as a cofactor.

Its subcellular location is the cell membrane. It carries out the reaction 5-methyl-5,6,7,8-tetrahydromethanopterin + coenzyme M + 2 Na(+)(in) = 5,6,7,8-tetrahydromethanopterin + methyl-coenzyme M + 2 Na(+)(out). It functions in the pathway one-carbon metabolism; methanogenesis from CO(2); methyl-coenzyme M from 5,10-methylene-5,6,7,8-tetrahydromethanopterin: step 2/2. Part of a complex that catalyzes the formation of methyl-coenzyme M and tetrahydromethanopterin from coenzyme M and methyl-tetrahydromethanopterin. This is an energy-conserving, sodium-ion translocating step. The protein is Tetrahydromethanopterin S-methyltransferase subunit A of Methanocaldococcus jannaschii (strain ATCC 43067 / DSM 2661 / JAL-1 / JCM 10045 / NBRC 100440) (Methanococcus jannaschii).